The chain runs to 455 residues: Probable alpha-galactosidase B (455 aa).

Positions 1–16 (MIEFLALITLISRANA) are cleaved as a signal peptide. 2 cysteine pairs are disulfide-bonded: cysteine 39/cysteine 71 and cysteine 121/cysteine 151. N-linked (GlcNAc...) asparagine glycosylation is present at asparagine 42. Catalysis depends on aspartate 149, which acts as the Nucleophile. Asparagine 177 and asparagine 192 each carry an N-linked (GlcNAc...) asparagine glycan. 222 to 226 (NWGNA) provides a ligand contact to substrate. Aspartate 244 serves as the catalytic Proton donor. Residue asparagine 395 is glycosylated (N-linked (GlcNAc...) asparagine).

The protein belongs to the glycosyl hydrolase 27 family.

It is found in the secreted. It carries out the reaction Hydrolysis of terminal, non-reducing alpha-D-galactose residues in alpha-D-galactosides, including galactose oligosaccharides, galactomannans and galactolipids.. Its function is as follows. Hydrolyzes a variety of simple alpha-D-galactoside as well as more complex molecules such as oligosaccharides and polysaccharides. The polypeptide is Probable alpha-galactosidase B (aglB) (Emericella nidulans (strain FGSC A4 / ATCC 38163 / CBS 112.46 / NRRL 194 / M139) (Aspergillus nidulans)).